We begin with the raw amino-acid sequence, 530 residues long: Sugar transport protein MST6 (530 aa).

At 1–18 (MAGGVVVNNGGGKDYPGK) the chain is on the cytoplasmic side. The helical transmembrane segment at 19–39 (LTMFVLFACIVAATGGLIFGY) threads the bilayer. At 40–81 (DIGISGGVTSMNPFLIKFFPSVYRKEQAAEKNQSNQYCKFDS) the chain is on the extracellular side. The helical transmembrane segment at 82-102 (PLLTMFTSSLYLAALVASFFA) threads the bilayer. Residues 103–119 (STVTRVAGRKWSMFGGG) are Cytoplasmic-facing. The helical transmembrane segment at 120 to 140 (VTFLVGAALNGAAKNVLMLIL) threads the bilayer. The Extracellular segment spans residues 141 to 142 (GR). The chain crosses the membrane as a helical span at residues 143-163 (VLLGVGVGFANQSVPLYLSEM). The Cytoplasmic segment spans residues 164-169 (APARLR). Residues 170 to 190 (GMLNIGFQLMITIGILCANLI) form a helical membrane-spanning segment. Residues 191–204 (NYGTAKIKGGWGWR) are Extracellular-facing. Residues 205–225 (VSLALAAVPAAIIAVGALFLP) traverse the membrane as a helical segment. The Cytoplasmic portion of the chain corresponds to 226–291 (DTPNSLIDRG…YRPQLTMAIA (66 aa)). The chain crosses the membrane as a helical span at residues 292-312 (IPLFQQLTGINVIMFYAPVLF). The Extracellular portion of the chain corresponds to 313–323 (KTLGFADDASL). Residues 324–344 (MSAVITGLVNVFATFVSIVTV) form a helical membrane-spanning segment. Residues 345–359 (DRLGRRKLFLQGGTQ) are Cytoplasmic-facing. A helical membrane pass occupies residues 360–380 (MLACQIVVGSLIGAKFGFSGV). Over 381–388 (ADIPKAYA) the chain is Extracellular. The chain crosses the membrane as a helical span at residues 389–409 (AFVVLFICAYVAGFAWSWGPL). Topologically, residues 410–428 (GWLVPSEIFPLEIRSAGQS) are cytoplasmic. Residues 429 to 449 (INVSVNMLFTFIIAQAFLPML) form a helical membrane-spanning segment. Topologically, residues 450-453 (CRFK) are extracellular. Residues 454–474 (FILFFFFGAWVVIMTLFVAFF) form a helical membrane-spanning segment. At 475 to 530 (LPETKNVPIEEMVLVWKSHWYWGRFIRDEDVHVGADVEMPAAGNRNGKVDPAKLAN) the chain is on the cytoplasmic side.

This sequence belongs to the major facilitator superfamily. Sugar transporter (TC 2.A.1.1) family. As to expression, expressed in leaf blades, leaf sheaths, anthers, ovaries and embryos. Expressed at low levels in roots and shoots.

The protein resides in the cell membrane. Functionally, mediates active uptake of hexoses by sugar:proton symport. Can transport glucose, fructose, mannose, galactose, xylose and ribose. The protein is Sugar transport protein MST6 of Oryza sativa subsp. japonica (Rice).